Here is a 238-residue protein sequence, read N- to C-terminus: Lactate utilization protein A (238 aa).

The protein belongs to the LutA/YkgE family.

In terms of biological role, is involved in L-lactate degradation and allows cells to grow with lactate as the sole carbon source. The protein is Lactate utilization protein A of Anoxybacillus flavithermus (strain DSM 21510 / WK1).